The primary structure comprises 627 residues: Glycerophosphodiester phosphodiesterase domain-containing protein 4 (627 aa).

Residues 1 to 17 (MLLFLWIETSNEYFNFD) are Cytoplasmic-facing. The chain crosses the membrane as a helical span at residues 18 to 38 (WVIFLGTGYWFYWSIFILSLA). G39 is a topological domain (extracellular). Residues 40 to 60 (ILTAYSSLLLLLGLLLLWEGI) traverse the membrane as a helical segment. The Cytoplasmic segment spans residues 61 to 69 (ELYLHLCHK). The helical transmembrane segment at 70 to 90 (ILILLVILPCVILMFIICKFW) threads the bilayer. Residues 91–107 (KERWLVAGLSLQIFAPY) lie on the Extracellular side of the membrane. Residues 108-128 (VHLVSITVMVILFWPVAIYVA) traverse the membrane as a helical segment. The Cytoplasmic segment spans residues 129–162 (RLEREVRMRRYRMTHSEKKRLKKCNVIARLRGLQ). The chain crosses the membrane as a helical span at residues 163-183 (VAVGLPFLLIFLSLCLMPLGI). Residues 184–468 (YSPCIQEKEN…PHFFMTPKFY (285 aa)) lie on the Extracellular side of the membrane. Residues 198-457 (PTLFGHRGAP…DNIGLLSQLN (260 aa)) form the GP-PDE domain. A divalent metal cation contacts are provided by E230, D232, and H245. N-linked (GlcNAc...) asparagine glycans are attached at residues N308 and N397. The chain crosses the membrane as a helical span at residues 469–489 (MFIWLLVDIISVLFIVAIFCF). The Cytoplasmic segment spans residues 490 to 627 (HWRRETIKEK…TMPSVEVPYP (138 aa)).

It belongs to the glycerophosphoryl diester phosphodiesterase family.

The protein localises to the membrane. The chain is Glycerophosphodiester phosphodiesterase domain-containing protein 4 (GDPD4) from Macaca fascicularis (Crab-eating macaque).